A 60-amino-acid polypeptide reads, in one-letter code: Large ribosomal subunit protein uL30 (60 aa).

It belongs to the universal ribosomal protein uL30 family. In terms of assembly, part of the 50S ribosomal subunit.

This chain is Large ribosomal subunit protein uL30, found in Leptothrix cholodnii (strain ATCC 51168 / LMG 8142 / SP-6) (Leptothrix discophora (strain SP-6)).